A 258-amino-acid chain; its full sequence is Thiazole synthase (258 aa).

Lys100 acts as the Schiff-base intermediate with DXP in catalysis. Residues Gly161, 187–188 (AG), and 209–210 (NT) contribute to the 1-deoxy-D-xylulose 5-phosphate site.

The protein belongs to the ThiG family. Homotetramer. Forms heterodimers with either ThiH or ThiS.

Its subcellular location is the cytoplasm. It carries out the reaction [ThiS sulfur-carrier protein]-C-terminal-Gly-aminoethanethioate + 2-iminoacetate + 1-deoxy-D-xylulose 5-phosphate = [ThiS sulfur-carrier protein]-C-terminal Gly-Gly + 2-[(2R,5Z)-2-carboxy-4-methylthiazol-5(2H)-ylidene]ethyl phosphate + 2 H2O + H(+). It functions in the pathway cofactor biosynthesis; thiamine diphosphate biosynthesis. Its function is as follows. Catalyzes the rearrangement of 1-deoxy-D-xylulose 5-phosphate (DXP) to produce the thiazole phosphate moiety of thiamine. Sulfur is provided by the thiocarboxylate moiety of the carrier protein ThiS. In vitro, sulfur can be provided by H(2)S. The polypeptide is Thiazole synthase (Campylobacter jejuni (strain RM1221)).